We begin with the raw amino-acid sequence, 208 residues long: Endoplasmic reticulum vesicle protein 25 (208 aa).

Residues 1–15 (MKFLLLLLLAPFISA) form the signal peptide. Over 16–177 (LRFDLKAESK…TNESTNERVR (162 aa)) the chain is Lumenal. The GOLD domain occupies 28-118 (QMCIRDFVSE…KRAIELDIES (91 aa)). The chain crosses the membrane as a helical span at residues 178–198 (NFSVLVIIVLTSLGAWQVNYL). The Cytoplasmic segment spans residues 199–208 (KNYFKSKHII).

This sequence belongs to the EMP24/GP25L family.

It is found in the endoplasmic reticulum membrane. The protein localises to the golgi apparatus membrane. Constituent of COPII-coated endoplasmic reticulum-derived transport vesicles. Required for efficient transport of a subset of secretory proteins to the Golgi. Facilitates retrograde transport from the Golgi to the endoplasmic reticulum. This chain is Endoplasmic reticulum vesicle protein 25 (ERV25), found in Candida glabrata (strain ATCC 2001 / BCRC 20586 / JCM 3761 / NBRC 0622 / NRRL Y-65 / CBS 138) (Yeast).